Consider the following 136-residue polypeptide: Large ribosomal subunit protein uL16 (136 aa).

Belongs to the universal ribosomal protein uL16 family. As to quaternary structure, part of the 50S ribosomal subunit.

In terms of biological role, binds 23S rRNA and is also seen to make contacts with the A and possibly P site tRNAs. In Haemophilus influenzae (strain 86-028NP), this protein is Large ribosomal subunit protein uL16.